The primary structure comprises 286 residues: Nucleotide-binding protein Sfum_2066 (286 aa).

8–15 is an ATP binding site; that stretch reads GLSGSGKS. Residue 59–62 participates in GTP binding; sequence DIRE.

The protein belongs to the RapZ-like family.

Its function is as follows. Displays ATPase and GTPase activities. In Syntrophobacter fumaroxidans (strain DSM 10017 / MPOB), this protein is Nucleotide-binding protein Sfum_2066.